Consider the following 76-residue polypeptide: UPF0291 protein BCE_1981 (76 aa).

Belongs to the UPF0291 family.

The protein resides in the cytoplasm. The chain is UPF0291 protein BCE_1981 from Bacillus cereus (strain ATCC 10987 / NRS 248).